Reading from the N-terminus, the 404-residue chain is uncharacterized protein (404 aa).

Cys69, Cys75, Cys78, and Cys166 together coordinate [4Fe-4S] cluster. 4 residues coordinate S-adenosyl-L-methionine: Gln226, Tyr253, Glu274, and Asp334. The active-site Nucleophile is Cys361.

Belongs to the class I-like SAM-binding methyltransferase superfamily. RNA M5U methyltransferase family.

This is an uncharacterized protein from Treponema denticola (strain ATCC 35405 / DSM 14222 / CIP 103919 / JCM 8153 / KCTC 15104).